Consider the following 391-residue polypeptide: Carbamoyl phosphate synthase small chain (391 aa).

Residues 1–199 (MVRISGFCCA…TWEFIEGPTT (199 aa)) are CPSase. L-glutamine contacts are provided by Ser-61, Gly-251, and Gly-253. The 186-residue stretch at 203–388 (TVVAIDFGVK…VALMRDRQPT (186 aa)) folds into the Glutamine amidotransferase type-1 domain. The Nucleophile role is filled by Cys-279. L-glutamine contacts are provided by Leu-280, Gln-283, Asn-319, Gly-321, and Phe-322. Active-site residues include His-361 and Glu-363.

Belongs to the CarA family. Composed of two chains; the small (or glutamine) chain promotes the hydrolysis of glutamine to ammonia, which is used by the large (or ammonia) chain to synthesize carbamoyl phosphate. Tetramer of heterodimers (alpha,beta)4.

It catalyses the reaction hydrogencarbonate + L-glutamine + 2 ATP + H2O = carbamoyl phosphate + L-glutamate + 2 ADP + phosphate + 2 H(+). The catalysed reaction is L-glutamine + H2O = L-glutamate + NH4(+). It participates in amino-acid biosynthesis; L-arginine biosynthesis; carbamoyl phosphate from bicarbonate: step 1/1. It functions in the pathway pyrimidine metabolism; UMP biosynthesis via de novo pathway; (S)-dihydroorotate from bicarbonate: step 1/3. Its function is as follows. Small subunit of the glutamine-dependent carbamoyl phosphate synthetase (CPSase). CPSase catalyzes the formation of carbamoyl phosphate from the ammonia moiety of glutamine, carbonate, and phosphate donated by ATP, constituting the first step of 2 biosynthetic pathways, one leading to arginine and/or urea and the other to pyrimidine nucleotides. The small subunit (glutamine amidotransferase) binds and cleaves glutamine to supply the large subunit with the substrate ammonia. The polypeptide is Carbamoyl phosphate synthase small chain (Synechococcus sp. (strain ATCC 27144 / PCC 6301 / SAUG 1402/1) (Anacystis nidulans)).